A 325-amino-acid polypeptide reads, in one-letter code: Centromere protein O (325 aa).

Positions 1 to 35 (MEEERNSDEKENALCGRSLTAASRDGGGRMPAAPL) are disordered. The stretch at 55–112 (LEMLEAQAHELGLKQEEKEQQEKKLDRLKARVQELRARRDELRAKVELQEKRLLDKEG) forms a coiled coil.

It belongs to the CENP-O/MCM21 family. In terms of assembly, component of the CENPA-HI complex, at least composed of CENPH, CENPI, CENPK, CENPL, CENPM, CENPO and CENPP. Component of a discrete complex composed of at least CENPO, CENPP, CENPQ, CENPR and CENPU.

The protein resides in the nucleus. It is found in the chromosome. The protein localises to the centromere. Functionally, component of the CENPA-HI complex, a centromeric complex involved in assembly of kinetochore proteins, mitotic progression and chromosome segregation. Involved in kinetochore assembly and required for recovery from spindle damage. This chain is Centromere protein O (CENPO), found in Gallus gallus (Chicken).